Reading from the N-terminus, the 64-residue chain is DNA-binding protein 7d (64 aa).

5 positions are modified to N6-methyllysine: Lys5, Lys7, Lys61, Lys63, and Lys64.

This sequence belongs to the 7 kDa DNA-binding/endoribonuclease P2 family. As to quaternary structure, monomer.

Its subcellular location is the cytoplasm. Functionally, can constrain negative DNA supercoils. May be involved in maintaining the integrity of the genome at high temperature. Stimulates the Holliday junction cleavage activity of Hjc. The sequence is that of DNA-binding protein 7d (sso7d) from Saccharolobus solfataricus (strain ATCC 35092 / DSM 1617 / JCM 11322 / P2) (Sulfolobus solfataricus).